A 262-amino-acid polypeptide reads, in one-letter code: Probable proteasome subunit beta type-7 (262 aa).

The protein belongs to the peptidase T1B family. As to quaternary structure, the 26S proteasome consists of a 20S proteasome core and two 19S regulatory subunits. The 20S proteasome core is composed of 28 subunits that are arranged in four stacked rings, resulting in a barrel-shaped structure. The two end rings are each formed by seven alpha subunits, and the two central rings are each formed by seven beta subunits. The catalytic chamber with the active sites is on the inside of the barrel.

Its subcellular location is the cytoplasm. The protein resides in the nucleus. Its function is as follows. Non-catalytic component of the proteasome, a multicatalytic proteinase complex which is characterized by its ability to cleave peptides with Arg, Phe, Tyr, Leu, and Glu adjacent to the leaving group at neutral or slightly basic pH. The proteasome has an ATP-dependent proteolytic activity. The sequence is that of Probable proteasome subunit beta type-7 from Schizosaccharomyces pombe (strain 972 / ATCC 24843) (Fission yeast).